Here is a 436-residue protein sequence, read N- to C-terminus: Trigger factor (436 aa).

The region spanning 163-248 is the PPIase FKBP-type domain; the sequence is TDRVIIDFAG…VKNVAEAILP (86 aa).

The protein belongs to the FKBP-type PPIase family. Tig subfamily.

It is found in the cytoplasm. It catalyses the reaction [protein]-peptidylproline (omega=180) = [protein]-peptidylproline (omega=0). In terms of biological role, involved in protein export. Acts as a chaperone by maintaining the newly synthesized protein in an open conformation. Functions as a peptidyl-prolyl cis-trans isomerase. The polypeptide is Trigger factor (Laribacter hongkongensis (strain HLHK9)).